Here is a 300-residue protein sequence, read N- to C-terminus: Cation-efflux pump FieF (300 aa).

Transmembrane regions (helical) follow at residues A12 to W32, I39 to V59, A82 to I102, P114 to F134, M151 to S171, and W172 to Y192. Zn(2+) contacts are provided by D45 and D49. Zn(2+) contacts are provided by H153 and D157.

This sequence belongs to the cation diffusion facilitator (CDF) transporter (TC 2.A.4) family. FieF subfamily. As to quaternary structure, homodimer.

It is found in the cell inner membrane. It catalyses the reaction Zn(2+)(in) + H(+)(out) = Zn(2+)(out) + H(+)(in). The enzyme catalyses Cd(2+)(in) + H(+)(out) = Cd(2+)(out) + H(+)(in). The catalysed reaction is Fe(2+)(in) + H(+)(out) = Fe(2+)(out) + H(+)(in). Its function is as follows. Divalent metal cation transporter which exports Zn(2+), Cd(2+) and possibly Fe(2+). May be involved in zinc and iron detoxification by efflux. This chain is Cation-efflux pump FieF, found in Escherichia fergusonii (strain ATCC 35469 / DSM 13698 / CCUG 18766 / IAM 14443 / JCM 21226 / LMG 7866 / NBRC 102419 / NCTC 12128 / CDC 0568-73).